The following is a 644-amino-acid chain: NADH-ubiquinone oxidoreductase chain 5 (644 aa).

Helical transmembrane passes span 4-23 (FITL…RYIG), 30-49 (LNII…YINI), 78-100 (DLLS…IFAW), 112-129 (FYTY…LVLG), 133-155 (LILF…FWYN), 167-189 (LFIN…YIYK), 199-221 (LVSY…AASA), 234-256 (WAMA…IAGI), 271-293 (NILL…IAIN), 300-322 (IIAL…SSYN), 327-349 (HVLC…IHSL), 361-383 (GLLI…LMGL), 398-420 (SSIG…SSLL), 466-488 (SWMA…YLLQ), 517-539 (INIY…IIYL), 546-568 (LLYI…RFLF), 594-616 (GFLY…FNII), and 623-642 (FNHY…YLQF).

The protein belongs to the complex I subunit 5 family.

It localises to the mitochondrion inner membrane. The enzyme catalyses a ubiquinone + NADH + 5 H(+)(in) = a ubiquinol + NAD(+) + 4 H(+)(out). Functionally, core subunit of the mitochondrial membrane respiratory chain NADH dehydrogenase (Complex I) that is believed to belong to the minimal assembly required for catalysis. Complex I functions in the transfer of electrons from NADH to the respiratory chain. The immediate electron acceptor for the enzyme is believed to be ubiquinone. The protein is NADH-ubiquinone oxidoreductase chain 5 (ND5) of Wickerhamomyces canadensis (Yeast).